The sequence spans 342 residues: RNA 3'-terminal phosphate cyclase (342 aa).

Residues glutamine 102 and 283-287 (HLADQ) contribute to the ATP site. The active-site Tele-AMP-histidine intermediate is the histidine 308.

The protein belongs to the RNA 3'-terminal cyclase family. Type 1 subfamily.

The protein resides in the cytoplasm. The enzyme catalyses a 3'-end 3'-phospho-ribonucleotide-RNA + ATP = a 3'-end 2',3'-cyclophospho-ribonucleotide-RNA + AMP + diphosphate. In terms of biological role, catalyzes the conversion of 3'-phosphate to a 2',3'-cyclic phosphodiester at the end of RNA. The mechanism of action of the enzyme occurs in 3 steps: (A) adenylation of the enzyme by ATP; (B) transfer of adenylate to an RNA-N3'P to produce RNA-N3'PP5'A; (C) and attack of the adjacent 2'-hydroxyl on the 3'-phosphorus in the diester linkage to produce the cyclic end product. The biological role of this enzyme is unknown but it is likely to function in some aspects of cellular RNA processing. The sequence is that of RNA 3'-terminal phosphate cyclase from Pseudomonas fluorescens (strain ATCC BAA-477 / NRRL B-23932 / Pf-5).